The following is a 182-amino-acid chain: Putative manganese efflux pump MntP (182 aa).

A run of 5 helical transmembrane segments spans residues Ile3–Ala23, Phe42–Ile62, Ile65–Ser85, Ile126–Phe146, and Ile161–Ile181.

Belongs to the MntP (TC 9.B.29) family.

It localises to the cell inner membrane. Probably functions as a manganese efflux pump. This is Putative manganese efflux pump MntP from Campylobacter hominis (strain ATCC BAA-381 / DSM 21671 / CCUG 45161 / LMG 19568 / NCTC 13146 / CH001A).